The sequence spans 386 residues: Histidinol-phosphate aminotransferase (386 aa).

Position 240 is an N6-(pyridoxal phosphate)lysine (Lys240).

This sequence belongs to the class-II pyridoxal-phosphate-dependent aminotransferase family. Histidinol-phosphate aminotransferase subfamily. Homodimer. The cofactor is pyridoxal 5'-phosphate.

It carries out the reaction L-histidinol phosphate + 2-oxoglutarate = 3-(imidazol-4-yl)-2-oxopropyl phosphate + L-glutamate. It participates in amino-acid biosynthesis; L-histidine biosynthesis; L-histidine from 5-phospho-alpha-D-ribose 1-diphosphate: step 7/9. The sequence is that of Histidinol-phosphate aminotransferase from Bifidobacterium longum (strain NCC 2705).